Consider the following 150-residue polypeptide: Large ribosomal subunit protein uL15 (150 aa).

Belongs to the universal ribosomal protein uL15 family. In terms of assembly, part of the 50S ribosomal subunit.

In terms of biological role, binds to the 23S rRNA. In Anaplasma marginale (strain Florida), this protein is Large ribosomal subunit protein uL15.